The primary structure comprises 365 residues: Chorismate synthase (365 aa).

Arginine 48 contributes to the NADP(+) binding site. FMN-binding positions include 125-127, glycine 286, 301-305, and arginine 328; these read RGS and KPTPS.

Belongs to the chorismate synthase family. FMNH2 serves as cofactor.

It carries out the reaction 5-O-(1-carboxyvinyl)-3-phosphoshikimate = chorismate + phosphate. Its pathway is metabolic intermediate biosynthesis; chorismate biosynthesis; chorismate from D-erythrose 4-phosphate and phosphoenolpyruvate: step 7/7. In terms of biological role, catalyzes the anti-1,4-elimination of the C-3 phosphate and the C-6 proR hydrogen from 5-enolpyruvylshikimate-3-phosphate (EPSP) to yield chorismate, which is the branch point compound that serves as the starting substrate for the three terminal pathways of aromatic amino acid biosynthesis. This reaction introduces a second double bond into the aromatic ring system. In Methanosphaera stadtmanae (strain ATCC 43021 / DSM 3091 / JCM 11832 / MCB-3), this protein is Chorismate synthase.